The sequence spans 168 residues: MIVEGKVLKFGDKIDTDIIIPARYLKYTDPQYLAQHAMEPLDPEFYKKASAGVILVAGKVFGMGSSREQAAIALKAAGVRAIIAESFARIFYRNAINNGLPAIVLPGVTQLINEGDYVKINVETGEIIVNNQKVYKGRGITGMPLKILESGGLLDYLKKVSVQNQGGN.

Belongs to the LeuD family. LeuD type 2 subfamily. Heterodimer of LeuC and LeuD.

It catalyses the reaction (2R,3S)-3-isopropylmalate = (2S)-2-isopropylmalate. It functions in the pathway amino-acid biosynthesis; L-leucine biosynthesis; L-leucine from 3-methyl-2-oxobutanoate: step 2/4. Catalyzes the isomerization between 2-isopropylmalate and 3-isopropylmalate, via the formation of 2-isopropylmaleate. The chain is 3-isopropylmalate dehydratase small subunit (leuD) from Sulfurisphaera tokodaii (strain DSM 16993 / JCM 10545 / NBRC 100140 / 7) (Sulfolobus tokodaii).